Reading from the N-terminus, the 577-residue chain is Arginine--tRNA ligase (577 aa).

Positions 122–132 (PNVAKEMHVGH) match the 'HIGH' region motif.

Belongs to the class-I aminoacyl-tRNA synthetase family. In terms of assembly, monomer.

The protein localises to the cytoplasm. It carries out the reaction tRNA(Arg) + L-arginine + ATP = L-arginyl-tRNA(Arg) + AMP + diphosphate. In Salmonella paratyphi B (strain ATCC BAA-1250 / SPB7), this protein is Arginine--tRNA ligase.